The sequence spans 272 residues: Shikimate dehydrogenase (NADP(+)) (272 aa).

Shikimate is bound by residues 14-16 and threonine 61; that span reads SKS. Residue lysine 65 is the Proton acceptor of the active site. Residue glutamate 77 coordinates NADP(+). Shikimate contacts are provided by asparagine 86 and aspartate 102. NADP(+) is bound by residues 126–130, 149–154, and methionine 213; these read GAGGA and NRTASR. Position 215 (tyrosine 215) interacts with shikimate. Glycine 237 contacts NADP(+).

The protein belongs to the shikimate dehydrogenase family. Homodimer.

It catalyses the reaction shikimate + NADP(+) = 3-dehydroshikimate + NADPH + H(+). It functions in the pathway metabolic intermediate biosynthesis; chorismate biosynthesis; chorismate from D-erythrose 4-phosphate and phosphoenolpyruvate: step 4/7. Functionally, involved in the biosynthesis of the chorismate, which leads to the biosynthesis of aromatic amino acids. Catalyzes the reversible NADPH linked reduction of 3-dehydroshikimate (DHSA) to yield shikimate (SA). The polypeptide is Shikimate dehydrogenase (NADP(+)) (Salmonella enteritidis PT4 (strain P125109)).